Reading from the N-terminus, the 504-residue chain is Cobyric acid synthase (504 aa).

The GATase cobBQ-type domain occupies 251–448 (DITIAIVQLP…LHGLFDSDAF (198 aa)). The active-site Nucleophile is cysteine 332. Histidine 440 is a catalytic residue.

Belongs to the CobB/CobQ family. CobQ subfamily.

The protein operates within cofactor biosynthesis; adenosylcobalamin biosynthesis. Its function is as follows. Catalyzes amidations at positions B, D, E, and G on adenosylcobyrinic A,C-diamide. NH(2) groups are provided by glutamine, and one molecule of ATP is hydrogenolyzed for each amidation. This is Cobyric acid synthase from Salmonella gallinarum (strain 287/91 / NCTC 13346).